Reading from the N-terminus, the 141-residue chain is Putative pre-16S rRNA nuclease (141 aa).

It belongs to the YqgF nuclease family.

It localises to the cytoplasm. Its function is as follows. Could be a nuclease involved in processing of the 5'-end of pre-16S rRNA. In Pseudomonas putida (strain ATCC 47054 / DSM 6125 / CFBP 8728 / NCIMB 11950 / KT2440), this protein is Putative pre-16S rRNA nuclease.